The sequence spans 331 residues: Nucleoporin Nup35 (331 aa).

Disordered regions lie at residues 1 to 63 and 79 to 110; these read MEPM…HELN and AHTAVGANSSTTAHGQTHSHHQTGPPTQGLFD. Composition is skewed to polar residues over residues 8–20, 35–56, and 84–104; these read SPVNSPGSNQTQY, HKNTLSPKTGRSNISFATSPGG, and GANSSTTAHGQTHSHHQTGPP. The 82-residue stretch at 187–268 folds into the RRM Nup35-type domain; the sequence is RLSDFWVTIF…SRCTDRSVID (82 aa).

It belongs to the Nup35 family. Interacts with Nup154.

Its subcellular location is the nucleus. The protein localises to the nuclear pore complex. In terms of biological role, functions as a component of the nuclear pore complex (NPC). May have a role in the organization of the inner nuclear membrane proteins at the nuclear envelope together with Nup154. The protein is Nucleoporin Nup35 of Drosophila melanogaster (Fruit fly).